A 396-amino-acid polypeptide reads, in one-letter code: Elongation factor Tu (396 aa).

The tr-type G domain occupies 10 to 206 (KPHVNVGTIG…ALDSYIPEPE (197 aa)). The tract at residues 19–26 (GHVDHGKT) is G1. 19–26 (GHVDHGKT) lines the GTP pocket. T26 contributes to the Mg(2+) binding site. Residues 60 to 64 (GITIN) form a G2 region. Positions 81 to 84 (DCPG) are G3. Residues 81–85 (DCPGH) and 136–139 (NKAD) contribute to the GTP site. A G4 region spans residues 136–139 (NKAD). The interval 174 to 176 (SAL) is G5.

It belongs to the TRAFAC class translation factor GTPase superfamily. Classic translation factor GTPase family. EF-Tu/EF-1A subfamily. As to quaternary structure, monomer.

The protein resides in the cytoplasm. The enzyme catalyses GTP + H2O = GDP + phosphate + H(+). In terms of biological role, GTP hydrolase that promotes the GTP-dependent binding of aminoacyl-tRNA to the A-site of ribosomes during protein biosynthesis. In Nitrosomonas europaea (strain ATCC 19718 / CIP 103999 / KCTC 2705 / NBRC 14298), this protein is Elongation factor Tu.